The chain runs to 295 residues: Protease HtpX homolog (295 aa).

2 helical membrane-spanning segments follow: residues 15–35 and 39–59; these read LVMA…GYAF and AQTG…VILG. Residue His-143 participates in Zn(2+) binding. Glu-144 is an active-site residue. His-147 contributes to the Zn(2+) binding site. 2 helical membrane-spanning segments follow: residues 159-179 and 195-215; these read ALAL…AMWW and VIML…ASMA. Zn(2+) is bound at residue Glu-224.

The protein belongs to the peptidase M48B family. Requires Zn(2+) as cofactor.

The protein localises to the cell membrane. The polypeptide is Protease HtpX homolog (Ligilactobacillus salivarius (strain UCC118) (Lactobacillus salivarius)).